A 416-amino-acid chain; its full sequence is Enterobactin exporter EntS (416 aa).

Over 1-21 (MNKQSWLLNLSLLKTHPAFRA) the chain is Cytoplasmic. Residues 22–42 (VFLARFISIVSLGLLGVAVPV) traverse the membrane as a helical segment. At 43 to 55 (QIQMMTHSTWQVG) the chain is on the periplasmic side. Residues 56–76 (LSVTLTGGAMFVGLMVGGVLA) form a helical membrane-spanning segment. The Cytoplasmic segment spans residues 77 to 83 (DRYERKK). The chain crosses the membrane as a helical span at residues 84–104 (VILLARGTCGIGFIGLCLNAL). Topologically, residues 105–109 (LPEPS) are periplasmic. The helical transmembrane segment at 110-130 (LLAIYLLGLWDGFFASLGVTA) threads the bilayer. Residues 131–156 (LLAATPALVGRENLMQAGAITMLTVR) are Cytoplasmic-facing. A helical membrane pass occupies residues 157-177 (LGSVISPMIGGLLLATGGVAW). A topological domain (periplasmic) is located at residue asparagine 178. A helical transmembrane segment spans residues 179-199 (YGLAAAGTFITLLPLLSLPAL). The Cytoplasmic portion of the chain corresponds to 200-218 (PPPPQPREHPLKSLLAGFR). The helical transmembrane segment at 219–239 (FLLASPLVGGIALLGGLLTMA) threads the bilayer. The Periplasmic portion of the chain corresponds to 240-256 (SAVRVLYPALADNWQMS). The chain crosses the membrane as a helical span at residues 257–277 (AAQIGFLYAAIPLGAAIGALT). At 278–287 (SGKLAHSARP) the chain is on the cytoplasmic side. The helical transmembrane segment at 288–307 (GLLMLLSTLGSFLAIGLFGL) threads the bilayer. Residues 308-313 (MPMWIL) lie on the Periplasmic side of the membrane. The helical transmembrane segment at 314–336 (GVVCLALFGWLSAVSSLLQYTML) threads the bilayer. The Cytoplasmic portion of the chain corresponds to 337–356 (QTQTPEAMLGRINGLWTAQN). Residues 357 to 377 (VTGDAIGAALLGGLGAMMTPV) form a helical membrane-spanning segment. Position 378 (alanine 378) is a topological domain, periplasmic. The chain crosses the membrane as a helical span at residues 379-399 (SASASGFGLLIIGVLLLLVLV). The Cytoplasmic portion of the chain corresponds to 400–416 (ELRHFRQTPPQVTASDS).

Belongs to the major facilitator superfamily. EntS (TC 2.A.1.38) family.

Its subcellular location is the cell inner membrane. In terms of biological role, component of an export pathway for enterobactin. The chain is Enterobactin exporter EntS from Escherichia coli (strain K12 / MC4100 / BW2952).